The following is a 270-amino-acid chain: BPI fold-containing family A member 1 (270 aa).

The signal sequence occupies residues 1–19 (MFLVGSLVVLCGLLAQSTA). Residues 104–109 (LVGGLL) are important for surfactant activity and antibacterial properties. Asn174 carries N-linked (GlcNAc...) asparagine glycosylation. Cys196 and Cys238 are disulfide-bonded.

Belongs to the BPI/LBP/Plunc superfamily. Plunc family. As to quaternary structure, monomer. Interacts (via N-terminus) with SCNN1B, a subunit of the heterotrimeric epithelial sodium channel (ENaC); this inhibits proteolytic activation of ENaC. Detected in adult nasal epithelium, heart, lung, spleen, testis and salivary gland, and in embryonic nasal epithelium, lung, salivary gland and thymus.

It is found in the secreted. In terms of biological role, lipid-binding protein which shows high specificity for the surfactant phospholipid dipalmitoylphosphatidylcholine (DPPC). Plays a role in the innate immune responses of the upper airways. Reduces the surface tension in secretions from airway epithelia and inhibits the formation of biofilm by pathogenic Gram-negative bacteria, such as P.aeruginosa and K.pneumoniae. Negatively regulates proteolytic cleavage of SCNN1G, an event that is required for activation of the epithelial sodium channel (ENaC), and thereby contributes to airway surface liquid homeostasis and proper clearance of mucus. Plays a role in the airway inflammatory response after exposure to irritants. May attract macrophages and neutrophils. The protein is BPI fold-containing family A member 1 (Bpifa1) of Rattus norvegicus (Rat).